The chain runs to 250 residues: 2,3-bisphosphoglycerate-dependent phosphoglycerate mutase (250 aa).

Substrate-binding positions include 10 to 17, 23 to 24, Arg-62, 89 to 92, Lys-100, 116 to 117, and 185 to 186; these read RHGESVWN, TG, ERHY, RR, and GN. The active-site Tele-phosphohistidine intermediate is the His-11. The active-site Proton donor/acceptor is the Glu-89.

It belongs to the phosphoglycerate mutase family. BPG-dependent PGAM subfamily. In terms of assembly, homodimer.

The enzyme catalyses (2R)-2-phosphoglycerate = (2R)-3-phosphoglycerate. It functions in the pathway carbohydrate degradation; glycolysis; pyruvate from D-glyceraldehyde 3-phosphate: step 3/5. Catalyzes the interconversion of 2-phosphoglycerate and 3-phosphoglycerate. In Proteus mirabilis (strain HI4320), this protein is 2,3-bisphosphoglycerate-dependent phosphoglycerate mutase.